The chain runs to 74 residues: Probable tetrachloroethene reductive dehalogenase membrane anchor protein (74 aa).

The next 2 membrane-spanning stretches (helical) occupy residues 11–31 (ALGLSLLYLALILVTFQISMG) and 40–60 (AGSILMVAGLIFSIIGVFLLM).

The protein belongs to the PceB family.

It localises to the cell inner membrane. Its function is as follows. May act as a membrane anchor for the tetrachloroethene reductive dehalogenase PceA. This is Probable tetrachloroethene reductive dehalogenase membrane anchor protein from Sulfurospirillum multivorans (Dehalospirillum multivorans).